Here is a 948-residue protein sequence, read N- to C-terminus: Alanine--tRNA ligase (948 aa).

Residues H638, H642, C739, and H743 each coordinate Zn(2+).

It belongs to the class-II aminoacyl-tRNA synthetase family. Zn(2+) serves as cofactor.

Its subcellular location is the cytoplasm. It carries out the reaction tRNA(Ala) + L-alanine + ATP = L-alanyl-tRNA(Ala) + AMP + diphosphate. Catalyzes the attachment of alanine to tRNA(Ala) in a two-step reaction: alanine is first activated by ATP to form Ala-AMP and then transferred to the acceptor end of tRNA(Ala). Also edits incorrectly charged Ser-tRNA(Ala) and Gly-tRNA(Ala) via its editing domain. This chain is Alanine--tRNA ligase, found in Paracidovorax citrulli (strain AAC00-1) (Acidovorax citrulli).